Reading from the N-terminus, the 219-residue chain is 16S rRNA (adenine(1408)-N(1))-methyltransferase (219 aa).

S-adenosyl-L-methionine-binding positions include G32, N38, D55, 87-88 (AE), 104-109 (LFPWGT), and 195-197 (SLW).

The protein belongs to the methyltransferase superfamily. Kanamycin-apramycin resistance family.

It catalyses the reaction adenosine(1408) in 16S rRNA + S-adenosyl-L-methionine = N(1)-methyladenosine(1408) in 16S rRNA + S-adenosyl-L-homocysteine + H(+). In terms of biological role, specifically methylates the N(1) position of adenine 1408 in 16S rRNA. Confers resistance to various aminoglycosides, including kanamycin, neomycin, apramycin, ribostamycin and gentamicin. Methylates only fully assembled 30S subunits. The sequence is that of 16S rRNA (adenine(1408)-N(1))-methyltransferase (npmA) from Escherichia coli.